A 333-amino-acid chain; its full sequence is Ribonucleoside-diphosphate reductase small chain B (333 aa).

Asp76, Glu107, and His110 together coordinate Fe cation. Tyr114 is an active-site residue. The Fe cation site is built by Glu169, Glu203, and His206.

Belongs to the ribonucleoside diphosphate reductase small chain family. In terms of assembly, heterodimer of a large and a small chain. It depends on Fe cation as a cofactor. Expressed in roots, rosette leaves, stems and flowers.

The protein localises to the cytoplasm. It carries out the reaction a 2'-deoxyribonucleoside 5'-diphosphate + [thioredoxin]-disulfide + H2O = a ribonucleoside 5'-diphosphate + [thioredoxin]-dithiol. In terms of biological role, provides the precursors necessary for DNA synthesis. Catalyzes the biosynthesis of deoxyribonucleotides from the corresponding ribonucleotides. The polypeptide is Ribonucleoside-diphosphate reductase small chain B (RNR2B) (Arabidopsis thaliana (Mouse-ear cress)).